We begin with the raw amino-acid sequence, 116 residues long: Large ribosomal subunit protein uL18 (116 aa).

The protein belongs to the universal ribosomal protein uL18 family. As to quaternary structure, part of the 50S ribosomal subunit; part of the 5S rRNA/L5/L18/L25 subcomplex. Contacts the 5S and 23S rRNAs.

Functionally, this is one of the proteins that bind and probably mediate the attachment of the 5S RNA into the large ribosomal subunit, where it forms part of the central protuberance. The polypeptide is Large ribosomal subunit protein uL18 (Shewanella oneidensis (strain ATCC 700550 / JCM 31522 / CIP 106686 / LMG 19005 / NCIMB 14063 / MR-1)).